Consider the following 142-residue polypeptide: Required for drug-induced death protein 1 (142 aa).

2 disordered regions span residues 1 to 32 (MTVG…DEEA) and 46 to 66 (EAAA…TRGA). Residues 116-138 (VVIGLQGFAAAYSAPFAVATSVV) traverse the membrane as a helical segment.

The protein resides in the membrane. Functionally, regulates drug efflux through modulation of ABCB1 localization and activity. The protein is Required for drug-induced death protein 1 of Homo sapiens (Human).